The following is a 201-amino-acid chain: Prostamide/prostaglandin F synthase (201 aa).

It belongs to the peroxiredoxin-like PRXL2 family. Prostamide/prostaglandin F synthase subfamily.

The protein resides in the cytoplasm. Its subcellular location is the cytosol. It carries out the reaction prostaglandin H2 + [thioredoxin]-dithiol = prostaglandin F2alpha + [thioredoxin]-disulfide. It catalyses the reaction prostamide F2alpha + [thioredoxin]-disulfide = prostamide H2 + [thioredoxin]-dithiol. Functionally, catalyzes the reduction of prostaglandin-ethanolamide H(2) (prostamide H(2)) to prostamide F(2alpha) with NADPH as proton donor. Also able to reduce prostaglandin H(2) to prostaglandin F(2alpha). This chain is Prostamide/prostaglandin F synthase (prxl2b), found in Xenopus tropicalis (Western clawed frog).